Here is a 136-residue protein sequence, read N- to C-terminus: Peptide methionine sulfoxide reductase MsrB (136 aa).

Residues 7 to 129 enclose the MsrB domain; that stretch reads SSSHENTLTE…NSASLSFTDD (123 aa). Residues Cys-46, Cys-49, Cys-95, and Cys-98 each coordinate Zn(2+). The active-site Nucleophile is the Cys-118.

The protein belongs to the MsrB Met sulfoxide reductase family. Zn(2+) serves as cofactor.

It carries out the reaction L-methionyl-[protein] + [thioredoxin]-disulfide + H2O = L-methionyl-(R)-S-oxide-[protein] + [thioredoxin]-dithiol. This Erwinia tasmaniensis (strain DSM 17950 / CFBP 7177 / CIP 109463 / NCPPB 4357 / Et1/99) protein is Peptide methionine sulfoxide reductase MsrB.